We begin with the raw amino-acid sequence, 98 residues long: Co-chaperonin GroES (98 aa).

This sequence belongs to the GroES chaperonin family. As to quaternary structure, heptamer of 7 subunits arranged in a ring. Interacts with the chaperonin GroEL.

Its subcellular location is the cytoplasm. Its function is as follows. Together with the chaperonin GroEL, plays an essential role in assisting protein folding. The GroEL-GroES system forms a nano-cage that allows encapsulation of the non-native substrate proteins and provides a physical environment optimized to promote and accelerate protein folding. GroES binds to the apical surface of the GroEL ring, thereby capping the opening of the GroEL channel. This chain is Co-chaperonin GroES, found in Allorhizobium ampelinum (strain ATCC BAA-846 / DSM 112012 / S4) (Agrobacterium vitis (strain S4)).